The following is a 243-amino-acid chain: MASLGVNIDHIANVRQARLASEPEPVQMAFLAELGGADGITVHLREDRRHIQDKDLKLLRATINTRLNLEMAATKEMVEIALQVKPDMVTIVPESREEITTEGGLEVVNNKEKLREIINNLHSAKIQTSIFIDPIEAQIKASKEIGAGWVEIHTGCYANASWEKQEIELAKIKASCAQARSMGLHVNAGHGLTYLNVEPIAAIEGIEELNIGHTIVARALAVGLQNAVKEMKSLVTNPRRNNF.

Residue Asn-7 participates in 3-amino-2-oxopropyl phosphate binding. Position 9–10 (9–10) interacts with 1-deoxy-D-xylulose 5-phosphate; that stretch reads DH. A 3-amino-2-oxopropyl phosphate-binding site is contributed by Arg-18. His-43 functions as the Proton acceptor in the catalytic mechanism. 1-deoxy-D-xylulose 5-phosphate-binding residues include Arg-45 and His-50. Catalysis depends on Glu-70, which acts as the Proton acceptor. Thr-100 is a 1-deoxy-D-xylulose 5-phosphate binding site. His-190 functions as the Proton donor in the catalytic mechanism. 3-amino-2-oxopropyl phosphate-binding positions include Gly-191 and 212-213; that span reads GH.

It belongs to the PNP synthase family. As to quaternary structure, homooctamer; tetramer of dimers.

It is found in the cytoplasm. The catalysed reaction is 3-amino-2-oxopropyl phosphate + 1-deoxy-D-xylulose 5-phosphate = pyridoxine 5'-phosphate + phosphate + 2 H2O + H(+). It participates in cofactor biosynthesis; pyridoxine 5'-phosphate biosynthesis; pyridoxine 5'-phosphate from D-erythrose 4-phosphate: step 5/5. In terms of biological role, catalyzes the complicated ring closure reaction between the two acyclic compounds 1-deoxy-D-xylulose-5-phosphate (DXP) and 3-amino-2-oxopropyl phosphate (1-amino-acetone-3-phosphate or AAP) to form pyridoxine 5'-phosphate (PNP) and inorganic phosphate. This Prochlorococcus marinus (strain MIT 9211) protein is Pyridoxine 5'-phosphate synthase.